The sequence spans 188 residues: Threonylcarbamoyl-AMP synthase (188 aa).

A YrdC-like domain is found at 3-188; the sequence is QLSSTQVTPV…RSGLVLRNGQ (186 aa).

The protein belongs to the SUA5 family. TsaC subfamily.

Its subcellular location is the cytoplasm. It carries out the reaction L-threonine + hydrogencarbonate + ATP = L-threonylcarbamoyladenylate + diphosphate + H2O. In terms of biological role, required for the formation of a threonylcarbamoyl group on adenosine at position 37 (t(6)A37) in tRNAs that read codons beginning with adenine. Catalyzes the conversion of L-threonine, HCO(3)(-)/CO(2) and ATP to give threonylcarbamoyl-AMP (TC-AMP) as the acyladenylate intermediate, with the release of diphosphate. The chain is Threonylcarbamoyl-AMP synthase from Shewanella denitrificans (strain OS217 / ATCC BAA-1090 / DSM 15013).